Here is a 614-residue protein sequence, read N- to C-terminus: UPF0329 protein ECU03_0090 (614 aa).

2 stretches are compositionally biased toward basic and acidic residues: residues 317–338 and 345–354; these read EREEAEKMRGEEERRKKEEESL and LRMEEKEKSK. Residues 317–420 are disordered; the sequence is EREEAEKMRG…KKSRSKGHRY (104 aa). The segment covering 355-364 has biased composition (basic residues); sequence SRGKKKKGGK. Positions 372 to 381 are enriched in basic and acidic residues; the sequence is AKMEEEKKDS. Positions 382–394 are enriched in acidic residues; it reads EEVEESAEAEVSL. A compositionally biased stretch (basic residues) spans 408-420; the sequence is SSKKKSRSKGHRY.

It belongs to the UPF0329 family.

This Encephalitozoon cuniculi (strain GB-M1) (Microsporidian parasite) protein is UPF0329 protein ECU03_0090.